The sequence spans 561 residues: Lysine--tRNA ligase (561 aa).

Glutamate 409 and glutamate 416 together coordinate Mg(2+).

The protein belongs to the class-II aminoacyl-tRNA synthetase family. As to quaternary structure, homodimer. Requires Mg(2+) as cofactor.

Its subcellular location is the cytoplasm. The enzyme catalyses tRNA(Lys) + L-lysine + ATP = L-lysyl-tRNA(Lys) + AMP + diphosphate. The polypeptide is Lysine--tRNA ligase (Nostoc punctiforme (strain ATCC 29133 / PCC 73102)).